We begin with the raw amino-acid sequence, 220 residues long: Translation initiation factor 6 (220 aa).

It belongs to the eIF-6 family.

Functionally, binds to the 50S ribosomal subunit and prevents its association with the 30S ribosomal subunit to form the 70S initiation complex. In Halobacterium salinarum (strain ATCC 29341 / DSM 671 / R1), this protein is Translation initiation factor 6.